The primary structure comprises 210 residues: DNA-directed RNA polymerases I, II, and III subunit RPABC1 (210 aa).

N-acetylmethionine is present on Met-1. Lys-81 is covalently cross-linked (Glycyl lysine isopeptide (Lys-Gly) (interchain with G-Cter in SUMO2)).

The protein belongs to the archaeal Rpo5/eukaryotic RPB5 RNA polymerase subunit family. As to quaternary structure, component of the RNA polymerase I (Pol I), RNA polymerase II (Pol II) and RNA polymerase III (Pol III) complexes consisting of at least 13, 12 and 17 subunits, respectively. Pol I complex consists of a ten-subunit catalytic core composed of POLR1A/RPA1, POLR1B/RPA2, POLR1C/RPAC1, POLR1D/RPAC2, POLR1H/RPA12, POLR2E/RPABC1, POLR2F/RPABC2, POLR2H/RPABC3, POLR2K/RPABC4 and POLR2L/RPABC5; a mobile stalk subunit POLR1F/RPA43 protruding from the core and additional subunits homologous to general transcription factors POLR1E/RPA49 and POLR1G/RPA34. Part of Pol I pre-initiation complex (PIC), in which Pol I core assembles with RRN3 and promoter-bound UTBF and SL1/TIF-IB complex. Pol II complex contains a ten-subunit catalytic core composed of POLR2A/RPB1, POLR2B/RPB2, POLR2C/RPB3, POLR2I/RPB9, POLR2J/RPB11, POLR2E/RPABC1, POLR2F/RPABC2, POLR2H/RPABC3, POLR2K/RPABC4 and POLR2L/RPABC5 and a mobile stalk composed of two subunits POLR2D/RPB4 and POLR2G/RPB7. Part of Pol II(G) complex, in which Pol II core associates with an additional subunit POLR2M; unlike conventional Pol II, Pol II(G) functions as a transcriptional repressor. Part of TBP-based Pol II pre-initiation complex (PIC), in which Pol II core assembles with general transcription factors and other specific initiation factors including GTF2E1, GTF2E2, GTF2F1, GTF2F2, TCEA1, ERCC2, ERCC3, GTF2H2, GTF2H3, GTF2H4, GTF2H5, GTF2A1, GTF2A2, GTF2B and TBP; this large multi-subunit PIC complex mediates DNA unwinding and targets Pol II core to the transcription start site where the first phosphodiester bond forms. In Pol II complex, this subunit is present in 2-fold molar excess over the other subunits. Pol III complex consists of a ten-subunit catalytic core composed of POLR3A/RPC1, POLR3B/RPC2, POLR1C/RPAC1, POLR1D/RPAC2, POLR3K/RPC10, POLR2E/RPABC1, POLR2F/RPABC2, POLR2H/RPABC3, POLR2K/RPABC4 and POLR2L/RPABC5; a mobile stalk composed of two subunits POLR3H/RPC8 and CRCP/RPC9, protruding from the core and functioning primarily in transcription initiation; and additional subunits homologous to general transcription factors of the RNA polymerase II machinery, POLR3C/RPC3-POLR3F/RPC6-POLR3G/RPC7 heterotrimer required for transcription initiation and POLR3D/RPC4-POLR3E/RPC5 heterodimer involved in both transcription initiation and termination. Component of the PAQosome complex which is responsible for the biogenesis of several protein complexes and which consists of R2TP complex members RUVBL1, RUVBL2, RPAP3 and PIH1D1, URI complex members PFDN2, PFDN6, PDRG1, UXT and URI1 as well as ASDURF, POLR2E and DNAAF10/WDR92. Interacts with URI1.

It localises to the nucleus. Its subcellular location is the nucleolus. In terms of biological role, DNA-dependent RNA polymerase catalyzes the transcription of DNA into RNA using the four ribonucleoside triphosphates as substrates. Common component of RNA polymerases I, II and III which synthesize ribosomal RNA precursors, mRNA precursors and many functional non-coding RNAs, and small RNAs, such as 5S rRNA and tRNAs, respectively. Pol II is the central component of the basal RNA polymerase II transcription machinery. Pols are composed of mobile elements that move relative to each other. In Pol II, POLR2E/RPABC1 is part of the lower jaw surrounding the central large cleft and thought to grab the incoming DNA template. Seems to be the major component in this process. The chain is DNA-directed RNA polymerases I, II, and III subunit RPABC1 (POLR2E) from Pongo abelii (Sumatran orangutan).